A 422-amino-acid polypeptide reads, in one-letter code: MPHLFSKACQYFPGGVNSPVRACRSVDITPPVVTRASGDFFTDSQGKTYIDFCGSWGSLIHGHSHPYICEAIQQGLQRGCSYGLTSEQEISFAEEIFSYLEISNDHKIRFMSTGSEATMTAVRLARGVTERPIIIKFSGCYHGHSDVFLQEIHFQQTILDTVDLTQPLTLSLPFNNLSLFLDVMNQIGHRVAGVIFEPICANMGVVLPLPGFIEGIIQTCRKTGSLSIMDEVVTGFRVSKGGAAALHPLKPDILVFGKILGGGLPASAVCAPAAIMDYLAPVGKVFQAGTLSGNPLAMSAGKASIALCREKNFYTQLSAIEDDFLSPIEQMIQQSGIPVTLVRYGNLFSFFFSENRPNNLKEVQLCNTDIFRTFYQQAFLKGIYLSPSPFEASFLSTAHSMENLNYAQQVLIESLEQACSLV.

K258 bears the N6-(pyridoxal phosphate)lysine mark.

Belongs to the class-III pyridoxal-phosphate-dependent aminotransferase family. HemL subfamily. In terms of assembly, homodimer. Pyridoxal 5'-phosphate is required as a cofactor.

It is found in the cytoplasm. The catalysed reaction is (S)-4-amino-5-oxopentanoate = 5-aminolevulinate. The protein operates within porphyrin-containing compound metabolism; protoporphyrin-IX biosynthesis; 5-aminolevulinate from L-glutamyl-tRNA(Glu): step 2/2. The polypeptide is Glutamate-1-semialdehyde 2,1-aminomutase (Chlamydia muridarum (strain MoPn / Nigg)).